The chain runs to 159 residues: Phosphopantetheine adenylyltransferase (159 aa).

Residue Thr10 participates in substrate binding. Residues 10-11 (TF) and His18 contribute to the ATP site. Positions 42, 74, and 88 each coordinate substrate. ATP-binding positions include 89-91 (GLR), Glu99, and 124-130 (WSFISSS).

It belongs to the bacterial CoaD family. As to quaternary structure, homohexamer. Mg(2+) serves as cofactor.

The protein localises to the cytoplasm. The catalysed reaction is (R)-4'-phosphopantetheine + ATP + H(+) = 3'-dephospho-CoA + diphosphate. Its pathway is cofactor biosynthesis; coenzyme A biosynthesis; CoA from (R)-pantothenate: step 4/5. In terms of biological role, reversibly transfers an adenylyl group from ATP to 4'-phosphopantetheine, yielding dephospho-CoA (dPCoA) and pyrophosphate. The protein is Phosphopantetheine adenylyltransferase of Salmonella typhimurium (strain LT2 / SGSC1412 / ATCC 700720).